We begin with the raw amino-acid sequence, 341 residues long: Glyceraldehyde-3-phosphate dehydrogenase (341 aa).

NAD(+)-binding positions include 11 to 12 (TI) and Gly110. Residue 139–141 (SCN) participates in D-glyceraldehyde 3-phosphate binding. Catalysis depends on Cys140, which acts as the Nucleophile. Arg168 serves as a coordination point for NAD(+). Residue 194–195 (HG) coordinates D-glyceraldehyde 3-phosphate. An NAD(+)-binding site is contributed by Gln302.

It belongs to the glyceraldehyde-3-phosphate dehydrogenase family. As to quaternary structure, homotetramer.

Its subcellular location is the cytoplasm. It catalyses the reaction D-glyceraldehyde 3-phosphate + phosphate + NADP(+) = (2R)-3-phospho-glyceroyl phosphate + NADPH + H(+). The catalysed reaction is D-glyceraldehyde 3-phosphate + phosphate + NAD(+) = (2R)-3-phospho-glyceroyl phosphate + NADH + H(+). It functions in the pathway carbohydrate degradation; glycolysis; pyruvate from D-glyceraldehyde 3-phosphate: step 1/5. The protein is Glyceraldehyde-3-phosphate dehydrogenase of Methanoculleus marisnigri (strain ATCC 35101 / DSM 1498 / JR1).